The chain runs to 137 residues: MIVIAFDFGLKNIGVAVGENILKKGRALNKLSAKNGSPDWNNIKNLLKIWQPKFLVVGLPLNIDGTRQDITKKAEKFAFLLKYKFNIFVYLHDERLSTKEAKSLIFKKNGFKVLKKEKIHSVAAVIILESWFNQNLY.

Belongs to the YqgF nuclease family.

The protein localises to the cytoplasm. Functionally, could be a nuclease involved in processing of the 5'-end of pre-16S rRNA. This Buchnera aphidicola subsp. Schizaphis graminum (strain Sg) protein is Putative pre-16S rRNA nuclease.